The primary structure comprises 56 residues: Alpha-conotoxin TxIA (56 aa).

The N-terminal stretch at 1 to 16 (MFTVFLLVVLATAVVS) is a signal peptide. The propeptide occupies 17–39 (FTSDRASDDGKAAASDLITLTIK). Disulfide bonds link Cys41-Cys47 and Cys42-Cys55. Positions 43–45 (SRP) are ser-Xaa-Pro motif, crucial for potent interaction with nAChR. Pro45 and Pro46 each carry 4-hydroxyproline; partial. Cys55 carries the post-translational modification Cysteine amide.

The protein belongs to the conotoxin A superfamily. Exists in 4 different forms, depending on hydroxylations. Tx1a-PP does not contain hydroxyproline, tx1a-OP has one hydroxyproline at position 45, tx1a-PO has one hydroxyproline at position 46, and tx1a-PP has two hydroxyprolines at positions 45 and 46. Expressed by the venom duct. Tx1a that containing 1 or 2 non-hydroxylated prolines are mostly present in part 5 of the venom duct (distal part near the pharynx), whereas tx1a-OO (with 2 hydroxyprolines) is mostly present in part 4 of the venom duct (follewed by part 3).

The protein localises to the secreted. In terms of biological role, alpha-conotoxins act on postsynaptic membranes, they bind to the nicotinic acetylcholine receptors (nAChR) and thus inhibit them. This toxin inhibits rat alpha-3-beta-2/CHRNA3-CHRNB2 (IC(50)=3.5 nM), rat alpha-7/CHRNA7 (IC(50)=392 nM) nAChR, and the L.stagnalis soluble acetylcholine receptor (all tested without hydroxyproline). The protein is Alpha-conotoxin TxIA of Conus textile (Cloth-of-gold cone).